A 400-amino-acid chain; its full sequence is MKFSQSLIALAACFLPLIAAAPVEAQHAKIRSPRAQDIIPDSYIVVFNKGVNDADIESEFSSVSRILSKRRSAHKGVGHKYNITGFKGYQIETDTGSIGEIAASPLVAWIEMDGKVQANALETRSGATWGLGRISHKATGSNSYIYDGSAGSGSTVYVLDTGIYIEHSEFEGRAKWGANYISGSPDTDENGHGTHCAGTIAGATYGVASKANLVAVKVLDRDGFGATSATIAGINFVGQNGKDGKSVISMSLRGHYSAAVNSAVESTVSNGVTIVVAAGNDGDDASNYSPASAKNAITVGSVDSTDTRASSSNYGSVVDIFAPGVNVKSASIGGKSAFSIKSGTSMATPHVAGLAAYLIGLGGLSSPAAIASKIASIGTKGSVKDPKGSVNLIAYNGNGA.

Residues 1-20 (MKFSQSLIALAACFLPLIAA) form the signal peptide. Positions 21–119 (APVEAQHAKI…IEMDGKVQAN (99 aa)) are excised as a propeptide. An Inhibitor I9 domain is found at 42–117 (SYIVVFNKGV…AWIEMDGKVQ (76 aa)). The N-linked (GlcNAc...) asparagine glycan is linked to N82. In terms of domain architecture, Peptidase S8 spans 128-400 (TWGLGRISHK…NLIAYNGNGA (273 aa)). Active-site charge relay system residues include D160, H192, and S345.

The protein belongs to the peptidase S8 family.

It is found in the secreted. Its function is as follows. Major secreted subtilisin-like serine endopeptidase. Mediates the degradation of collagen, the major structural protein in the mammalian host. Degrades the nonhelical regions of collagen that function in the cross-linking of the helical components. May function as virulence factor involved in epidermal wing necrosis observed in white nose syndrome (WNS) in bats. The protein is Subtilisin-like protease 1 of Pseudogymnoascus destructans (strain ATCC MYA-4855 / 20631-21) (Bat white-nose syndrome fungus).